We begin with the raw amino-acid sequence, 382 residues long: Chaperone protein DnaJ (382 aa).

In terms of domain architecture, J spans 5-70 (DYYEVLGLQK…QKRAAYDQYG (66 aa)). Residues 134 to 212 (GTTKDIQINT…CHGEGRVHKK (79 aa)) form a CR-type zinc finger. Zn(2+) is bound by residues Cys-147, Cys-150, Cys-164, Cys-167, Cys-186, Cys-189, Cys-200, and Cys-203. CXXCXGXG motif repeat units follow at residues 147–154 (CDSCGGSG), 164–171 (CPHCHGSG), 186–193 (CPTCHGSG), and 200–207 (CRNCHGEG).

The protein belongs to the DnaJ family. As to quaternary structure, homodimer. It depends on Zn(2+) as a cofactor.

The protein localises to the cytoplasm. In terms of biological role, participates actively in the response to hyperosmotic and heat shock by preventing the aggregation of stress-denatured proteins and by disaggregating proteins, also in an autonomous, DnaK-independent fashion. Unfolded proteins bind initially to DnaJ; upon interaction with the DnaJ-bound protein, DnaK hydrolyzes its bound ATP, resulting in the formation of a stable complex. GrpE releases ADP from DnaK; ATP binding to DnaK triggers the release of the substrate protein, thus completing the reaction cycle. Several rounds of ATP-dependent interactions between DnaJ, DnaK and GrpE are required for fully efficient folding. Also involved, together with DnaK and GrpE, in the DNA replication of plasmids through activation of initiation proteins. This chain is Chaperone protein DnaJ, found in Haemophilus influenzae (strain ATCC 51907 / DSM 11121 / KW20 / Rd).